A 331-amino-acid chain; its full sequence is Glyceraldehyde-3-phosphate dehydrogenase 3 (331 aa).

NAD(+) contacts are provided by residues 11 to 12, Asp33, and Glu77; that span reads RI. Ser148 bears the Phosphoserine mark. Residue 148–150 participates in D-glyceraldehyde 3-phosphate binding; that stretch reads SCT. Residue Cys149 is the Nucleophile of the active site. At Ser177 the chain carries Phosphoserine. Thr179 serves as a coordination point for D-glyceraldehyde 3-phosphate. Ser200 bears the Phosphoserine mark. Residues 208-209 and Arg231 contribute to the D-glyceraldehyde 3-phosphate site; that span reads TG. Asn313 contacts NAD(+).

The protein belongs to the glyceraldehyde-3-phosphate dehydrogenase family. As to quaternary structure, homotetramer.

It localises to the cytoplasm. The catalysed reaction is D-glyceraldehyde 3-phosphate + phosphate + NAD(+) = (2R)-3-phospho-glyceroyl phosphate + NADH + H(+). It participates in carbohydrate degradation; glycolysis; pyruvate from D-glyceraldehyde 3-phosphate: step 1/5. The protein is Glyceraldehyde-3-phosphate dehydrogenase 3 of Kluyveromyces marxianus (Yeast).